A 252-amino-acid polypeptide reads, in one-letter code: uncharacterized protein (252 aa).

In terms of domain architecture, HTH deoR-type spans 3-58 (AKDRIQAIKQMVANDKKVTVSNLSGIFQVTEETIRRDLEKLEDEGFLTRTYGGAVL). Positions 20–39 (VTVSNLSGIFQVTEETIRRD) form a DNA-binding region, H-T-H motif.

This is an uncharacterized protein from Escherichia coli (strain K12).